Here is a 101-residue protein sequence, read N- to C-terminus: Small ribosomal subunit protein uS14 (101 aa).

The protein belongs to the universal ribosomal protein uS14 family. As to quaternary structure, part of the 30S ribosomal subunit. Contacts proteins S3 and S10.

In terms of biological role, binds 16S rRNA, required for the assembly of 30S particles and may also be responsible for determining the conformation of the 16S rRNA at the A site. This chain is Small ribosomal subunit protein uS14, found in Chelativorans sp. (strain BNC1).